The chain runs to 122 residues: Small ribosomal subunit protein uS13 (122 aa).

The disordered stretch occupies residues 98–122 (VRGQKTKSNARTRKGPRPSRIKKKK). Residues 101-122 (QKTKSNARTRKGPRPSRIKKKK) are compositionally biased toward basic residues.

The protein belongs to the universal ribosomal protein uS13 family. Part of the 30S ribosomal subunit. Forms a loose heterodimer with protein S19. Forms two bridges to the 50S subunit in the 70S ribosome.

In terms of biological role, located at the top of the head of the 30S subunit, it contacts several helices of the 16S rRNA. In the 70S ribosome it contacts the 23S rRNA (bridge B1a) and protein L5 of the 50S subunit (bridge B1b), connecting the 2 subunits; these bridges are implicated in subunit movement. Contacts the tRNAs in the A and P-sites. This Thermosipho africanus (strain TCF52B) protein is Small ribosomal subunit protein uS13.